Here is a 399-residue protein sequence, read N- to C-terminus: Chorismate synthase (399 aa).

The NADP(+) site is built by arginine 40 and arginine 46. FMN-binding positions include 135–137, 256–257, glycine 301, 316–320, and arginine 342; these read RAS, QA, and KPIAT.

The protein belongs to the chorismate synthase family. As to quaternary structure, homotetramer. It depends on FMNH2 as a cofactor.

The enzyme catalyses 5-O-(1-carboxyvinyl)-3-phosphoshikimate = chorismate + phosphate. Its pathway is metabolic intermediate biosynthesis; chorismate biosynthesis; chorismate from D-erythrose 4-phosphate and phosphoenolpyruvate: step 7/7. Functionally, catalyzes the anti-1,4-elimination of the C-3 phosphate and the C-6 proR hydrogen from 5-enolpyruvylshikimate-3-phosphate (EPSP) to yield chorismate, which is the branch point compound that serves as the starting substrate for the three terminal pathways of aromatic amino acid biosynthesis. This reaction introduces a second double bond into the aromatic ring system. This chain is Chorismate synthase, found in Paenarthrobacter aurescens (strain TC1).